The primary structure comprises 278 residues: 4-deoxy-L-threo-5-hexosulose-uronate ketol-isomerase (278 aa).

Zn(2+) contacts are provided by histidine 196, histidine 198, glutamate 203, and histidine 245.

It belongs to the KduI family. It depends on Zn(2+) as a cofactor.

The catalysed reaction is 5-dehydro-4-deoxy-D-glucuronate = 3-deoxy-D-glycero-2,5-hexodiulosonate. The protein operates within glycan metabolism; pectin degradation; 2-dehydro-3-deoxy-D-gluconate from pectin: step 4/5. Catalyzes the isomerization of 5-dehydro-4-deoxy-D-glucuronate to 3-deoxy-D-glycero-2,5-hexodiulosonate. This chain is 4-deoxy-L-threo-5-hexosulose-uronate ketol-isomerase, found in Salmonella agona (strain SL483).